We begin with the raw amino-acid sequence, 351 residues long: Methionine import ATP-binding protein MetN (351 aa).

The region spanning 2-241 (IELRNVTKTY…PKTEIAKKFT (240 aa)) is the ABC transporter domain. 38-45 (GKSGAGKS) contacts ATP.

Belongs to the ABC transporter superfamily. Methionine importer (TC 3.A.1.24) family. The complex is composed of two ATP-binding proteins (MetN), two transmembrane proteins (MetI) and a solute-binding protein (MetQ).

The protein localises to the cell inner membrane. It catalyses the reaction L-methionine(out) + ATP + H2O = L-methionine(in) + ADP + phosphate + H(+). The enzyme catalyses D-methionine(out) + ATP + H2O = D-methionine(in) + ADP + phosphate + H(+). In terms of biological role, part of the ABC transporter complex MetNIQ involved in methionine import. Responsible for energy coupling to the transport system. This is Methionine import ATP-binding protein MetN from Coxiella burnetii (strain RSA 493 / Nine Mile phase I).